We begin with the raw amino-acid sequence, 451 residues long: Tryptophan--tRNA ligase (451 aa).

ATP contacts are provided by residues 10-12 and 18-19; these read TTT and GN. A 'HIGH' region motif is present at residues 11–19; the sequence is TTGTPHLGN. Asp143 contributes to the L-tryptophan binding site. ATP-binding positions include 155–157, Leu195, and 202–206; these read GRD and KMSKS. The 'KMSKS' region motif lies at 202–206; it reads KMSKS.

The protein belongs to the class-I aminoacyl-tRNA synthetase family. Homodimer.

It is found in the cytoplasm. It catalyses the reaction tRNA(Trp) + L-tryptophan + ATP = L-tryptophyl-tRNA(Trp) + AMP + diphosphate + H(+). In terms of biological role, catalyzes the attachment of tryptophan to tRNA(Trp). This Bordetella pertussis (strain Tohama I / ATCC BAA-589 / NCTC 13251) protein is Tryptophan--tRNA ligase.